A 305-amino-acid chain; its full sequence is Superoxide dismutase [Fe] 2, chloroplastic (305 aa).

The transit peptide at Met-1 to Ser-46 directs the protein to the chloroplast. 4 residues coordinate Fe cation: His-77, His-129, Asp-228, and His-232. A disordered region spans residues Ala-270 to Asp-305. The segment covering Gly-277 to Asp-305 has biased composition (acidic residues).

Belongs to the iron/manganese superoxide dismutase family. In terms of assembly, heterodimer with FSD3. Interacts with MRL7 and PRDA1. Requires Fe cation as cofactor.

Its subcellular location is the plastid. It localises to the chloroplast thylakoid. The catalysed reaction is 2 superoxide + 2 H(+) = H2O2 + O2. Its activity is regulated as follows. Activated by cpn20/cpn21 (in vitro). Functionally, destroys superoxide anion radicals which are normally produced within the cells and which are toxic to biological systems. Plays important role in chloroplast development, particularly in the maintenance of thylakoids membranes. Seems to act as a heterodimer with FSD3. The sequence is that of Superoxide dismutase [Fe] 2, chloroplastic (FSD2) from Arabidopsis thaliana (Mouse-ear cress).